The following is a 188-amino-acid chain: Ribosome maturation factor RimM (188 aa).

In terms of domain architecture, PRC barrel spans 98-174 (EGTFYYHDLR…HLTADAPAGL (77 aa)). Residues 169–188 (DAPAGLIGPEPGEEDGAAES) form a disordered region. A compositionally biased stretch (acidic residues) spans 179–188 (PGEEDGAAES).

The protein belongs to the RimM family. As to quaternary structure, binds ribosomal protein uS19.

Its subcellular location is the cytoplasm. Its function is as follows. An accessory protein needed during the final step in the assembly of 30S ribosomal subunit, possibly for assembly of the head region. Essential for efficient processing of 16S rRNA. May be needed both before and after RbfA during the maturation of 16S rRNA. It has affinity for free ribosomal 30S subunits but not for 70S ribosomes. This chain is Ribosome maturation factor RimM, found in Deinococcus radiodurans (strain ATCC 13939 / DSM 20539 / JCM 16871 / CCUG 27074 / LMG 4051 / NBRC 15346 / NCIMB 9279 / VKM B-1422 / R1).